Here is a 100-residue protein sequence, read N- to C-terminus: NADH-quinone oxidoreductase subunit K (100 aa).

The next 3 membrane-spanning stretches (helical) occupy residues 1-21, 28-48, and 64-84; these read MIGLNHYLIVSGLLFCIGLAG, ILLLFFSTEIMLNAINIGFIA, and FIIAIAASEVAIGLGLVILWF.

The protein belongs to the complex I subunit 4L family. In terms of assembly, NDH-1 is composed of 14 different subunits. Subunits NuoA, H, J, K, L, M, N constitute the membrane sector of the complex.

It is found in the cell inner membrane. The catalysed reaction is a quinone + NADH + 5 H(+)(in) = a quinol + NAD(+) + 4 H(+)(out). In terms of biological role, NDH-1 shuttles electrons from NADH, via FMN and iron-sulfur (Fe-S) centers, to quinones in the respiratory chain. The immediate electron acceptor for the enzyme in this species is believed to be ubiquinone. Couples the redox reaction to proton translocation (for every two electrons transferred, four hydrogen ions are translocated across the cytoplasmic membrane), and thus conserves the redox energy in a proton gradient. The sequence is that of NADH-quinone oxidoreductase subunit K from Helicobacter pylori (strain G27).